Reading from the N-terminus, the 319-residue chain is Lipoyl synthase (319 aa).

Positions 1-32 (MVVLVDTVSSTPVRPRHPEKAARPDSLSPKKP) are disordered. Residues 16 to 32 (RHPEKAARPDSLSPKKP) are compositionally biased toward basic and acidic residues. Residues Cys61, Cys66, Cys72, Cys87, Cys91, Cys94, and Ser300 each contribute to the [4Fe-4S] cluster site. The region spanning 73 to 289 (WDKKHATFMI…GKTAYAKGFL (217 aa)) is the Radical SAM core domain.

This sequence belongs to the radical SAM superfamily. Lipoyl synthase family. The cofactor is [4Fe-4S] cluster.

Its subcellular location is the cytoplasm. The catalysed reaction is [[Fe-S] cluster scaffold protein carrying a second [4Fe-4S](2+) cluster] + N(6)-octanoyl-L-lysyl-[protein] + 2 oxidized [2Fe-2S]-[ferredoxin] + 2 S-adenosyl-L-methionine + 4 H(+) = [[Fe-S] cluster scaffold protein] + N(6)-[(R)-dihydrolipoyl]-L-lysyl-[protein] + 4 Fe(3+) + 2 hydrogen sulfide + 2 5'-deoxyadenosine + 2 L-methionine + 2 reduced [2Fe-2S]-[ferredoxin]. Its pathway is protein modification; protein lipoylation via endogenous pathway; protein N(6)-(lipoyl)lysine from octanoyl-[acyl-carrier-protein]: step 2/2. In terms of biological role, catalyzes the radical-mediated insertion of two sulfur atoms into the C-6 and C-8 positions of the octanoyl moiety bound to the lipoyl domains of lipoate-dependent enzymes, thereby converting the octanoylated domains into lipoylated derivatives. This Rhodopseudomonas palustris (strain BisB5) protein is Lipoyl synthase.